Reading from the N-terminus, the 237-residue chain is Alpha-S1-casein (237 aa).

Positions 1–15 are cleaved as a signal peptide; sequence MKLLIFSCLVTLALA. The segment at 39–60 is disordered; that stretch reads EDPIPVSEASSSEESVHQLNRD. Phosphoserine is present on residues serine 79, serine 80, and serine 81.

This sequence belongs to the alpha-casein family. As to expression, mammary gland specific. Secreted in milk.

The protein resides in the secreted. In terms of biological role, important role in the capacity of milk to transport calcium phosphate. This is Alpha-S1-casein (CSN1S1) from Notamacropus eugenii (Tammar wallaby).